The chain runs to 212 residues: External core antigen (212 aa).

A signal peptide spans 1–19 (MQLFHLCLIISCSCPTVQA). The tract at residues 25-27 (GWL) is HBEAG. Positions 165–212 (NAPILSTLPETTVVRRRGRSPRRRTPSPRRRRSQSPRRRRSQSRESQC) are disordered. Residues 178–205 (VRRRGRSPRRRTPSPRRRRSQSPRRRRS) are compositionally biased toward basic residues. One copy of the 1; half-length repeat lies at 184–190 (SPRRRTP). Residues 184–206 (SPRRRTPSPRRRRSQSPRRRRSQ) are 3 X 8 AA repeats of S-P-R-R-R-R-S-Q. The propeptide occupies 184–212 (SPRRRTPSPRRRRSQSPRRRRSQSRESQC). A run of 2 repeats spans residues 191–198 (SPRRRRSQ) and 199–206 (SPRRRRSQ).

The protein belongs to the orthohepadnavirus precore antigen family. As to quaternary structure, homodimerizes. Phosphorylated. In terms of processing, cleaved by host furin.

Its subcellular location is the secreted. It localises to the host nucleus. Functionally, may regulate immune response to the intracellular capsid in acting as a T-cell tolerogen, by having an immunoregulatory effect which prevents destruction of infected cells by cytotoxic T-cells. This immune regulation may predispose to chronicity during perinatal infections and prevent severe liver injury during adult infections. The protein is External core antigen of Hepatitis B virus genotype B2 (isolate Indonesia/pIDW420/1988) (HBV-B).